A 384-amino-acid polypeptide reads, in one-letter code: Chaperone protein DnaJ (384 aa).

In terms of domain architecture, J spans 5-70 (DFYEVLGVSK…DKKAAYDRYG (66 aa)). The CR-type zinc finger occupies 143 to 221 (GAQKTITVPG…CHGSGRIEKE (79 aa)). Zn(2+) is bound by residues Cys-156, Cys-159, Cys-173, Cys-176, Cys-195, Cys-198, Cys-209, and Cys-212. CXXCXGXG motif repeat units follow at residues 156-163 (CGSCNGTG), 173-180 (CPTCSGLG), 195-202 (CPTCGGQG), and 209-216 (CRVCHGSG).

It belongs to the DnaJ family. Homodimer. The cofactor is Zn(2+).

The protein localises to the cytoplasm. Participates actively in the response to hyperosmotic and heat shock by preventing the aggregation of stress-denatured proteins and by disaggregating proteins, also in an autonomous, DnaK-independent fashion. Unfolded proteins bind initially to DnaJ; upon interaction with the DnaJ-bound protein, DnaK hydrolyzes its bound ATP, resulting in the formation of a stable complex. GrpE releases ADP from DnaK; ATP binding to DnaK triggers the release of the substrate protein, thus completing the reaction cycle. Several rounds of ATP-dependent interactions between DnaJ, DnaK and GrpE are required for fully efficient folding. Also involved, together with DnaK and GrpE, in the DNA replication of plasmids through activation of initiation proteins. The sequence is that of Chaperone protein DnaJ from Rhodobacter capsulatus (Rhodopseudomonas capsulata).